Consider the following 220-residue polypeptide: Pyridoxine/pyridoxamine 5'-phosphate oxidase (220 aa).

Residues 69–74 (RVVLLK), 84–85 (YT), Arg-90, Lys-91, and Gln-113 each bind FMN. Substrate is bound at residue Lys-74. Tyr-131, Arg-135, and Ser-139 together coordinate substrate. Residues 148–149 (QS) and Trp-193 contribute to the FMN site. 199-201 (RLH) lines the substrate pocket. Arg-203 lines the FMN pocket.

Belongs to the pyridoxamine 5'-phosphate oxidase family. Homodimer. FMN serves as cofactor.

The enzyme catalyses pyridoxamine 5'-phosphate + O2 + H2O = pyridoxal 5'-phosphate + H2O2 + NH4(+). It carries out the reaction pyridoxine 5'-phosphate + O2 = pyridoxal 5'-phosphate + H2O2. Its pathway is cofactor metabolism; pyridoxal 5'-phosphate salvage; pyridoxal 5'-phosphate from pyridoxamine 5'-phosphate: step 1/1. It functions in the pathway cofactor metabolism; pyridoxal 5'-phosphate salvage; pyridoxal 5'-phosphate from pyridoxine 5'-phosphate: step 1/1. Functionally, catalyzes the oxidation of either pyridoxine 5'-phosphate (PNP) or pyridoxamine 5'-phosphate (PMP) into pyridoxal 5'-phosphate (PLP). This Myxococcus xanthus protein is Pyridoxine/pyridoxamine 5'-phosphate oxidase.